A 178-amino-acid polypeptide reads, in one-letter code: Protein GrpE (178 aa).

Residues 1–26 (MQDQDKYAEQAASMEEPASADAPAIV) form a disordered region.

The protein belongs to the GrpE family. As to quaternary structure, homodimer.

Its subcellular location is the cytoplasm. Its function is as follows. Participates actively in the response to hyperosmotic and heat shock by preventing the aggregation of stress-denatured proteins, in association with DnaK and GrpE. It is the nucleotide exchange factor for DnaK and may function as a thermosensor. Unfolded proteins bind initially to DnaJ; upon interaction with the DnaJ-bound protein, DnaK hydrolyzes its bound ATP, resulting in the formation of a stable complex. GrpE releases ADP from DnaK; ATP binding to DnaK triggers the release of the substrate protein, thus completing the reaction cycle. Several rounds of ATP-dependent interactions between DnaJ, DnaK and GrpE are required for fully efficient folding. The sequence is that of Protein GrpE from Herminiimonas arsenicoxydans.